A 504-amino-acid chain; its full sequence is Maturase K (504 aa).

Belongs to the intron maturase 2 family. MatK subfamily.

It is found in the plastid. The protein resides in the chloroplast. In terms of biological role, usually encoded in the trnK tRNA gene intron. Probably assists in splicing its own and other chloroplast group II introns. The protein is Maturase K of Gossypium gossypioides (Mexican cotton).